Reading from the N-terminus, the 234-residue chain is Leucyl/phenylalanyl-tRNA--protein transferase (234 aa).

This sequence belongs to the L/F-transferase family.

It localises to the cytoplasm. It catalyses the reaction N-terminal L-lysyl-[protein] + L-leucyl-tRNA(Leu) = N-terminal L-leucyl-L-lysyl-[protein] + tRNA(Leu) + H(+). The enzyme catalyses N-terminal L-arginyl-[protein] + L-leucyl-tRNA(Leu) = N-terminal L-leucyl-L-arginyl-[protein] + tRNA(Leu) + H(+). It carries out the reaction L-phenylalanyl-tRNA(Phe) + an N-terminal L-alpha-aminoacyl-[protein] = an N-terminal L-phenylalanyl-L-alpha-aminoacyl-[protein] + tRNA(Phe). In terms of biological role, functions in the N-end rule pathway of protein degradation where it conjugates Leu, Phe and, less efficiently, Met from aminoacyl-tRNAs to the N-termini of proteins containing an N-terminal arginine or lysine. The chain is Leucyl/phenylalanyl-tRNA--protein transferase from Shigella sonnei (strain Ss046).